The chain runs to 316 residues: Carbamate kinase-like protein YahI (316 aa).

It belongs to the carbamate kinase family.

This Escherichia coli (strain K12) protein is Carbamate kinase-like protein YahI (yahI).